Reading from the N-terminus, the 352-residue chain is tRNA-specific 2-thiouridylase MnmA (352 aa).

Residues 7 to 14 and Leu-33 each bind ATP; that span reads GLSGGVDS. The Nucleophile role is filled by Cys-94. Cys-94 and Cys-193 are oxidised to a cystine. Gly-119 lines the ATP pocket. The tract at residues 143–145 is interaction with tRNA; sequence KDQ. The active-site Cysteine persulfide intermediate is Cys-193. Positions 298–299 are interaction with tRNA; that stretch reads RY.

Belongs to the MnmA/TRMU family.

It is found in the cytoplasm. The enzyme catalyses S-sulfanyl-L-cysteinyl-[protein] + uridine(34) in tRNA + AH2 + ATP = 2-thiouridine(34) in tRNA + L-cysteinyl-[protein] + A + AMP + diphosphate + H(+). Its function is as follows. Catalyzes the 2-thiolation of uridine at the wobble position (U34) of tRNA, leading to the formation of s(2)U34. This chain is tRNA-specific 2-thiouridylase MnmA, found in Trichormus variabilis (strain ATCC 29413 / PCC 7937) (Anabaena variabilis).